A 64-amino-acid chain; its full sequence is Alpha-toxin Amm5 (64 aa).

The LCN-type CS-alpha/beta domain maps to 2-64 (KDGYIIDDLN…VSIKEKGRCN (63 aa)). 4 cysteine pairs are disulfide-bonded: Cys-12-Cys-63, Cys-16-Cys-36, Cys-22-Cys-46, and Cys-26-Cys-48. Position 64 is an asparagine amide (Asn-64).

In terms of tissue distribution, expressed by the venom gland.

Its subcellular location is the secreted. Functionally, alpha toxins bind voltage-independently at site-3 of sodium channels (Nav) and inhibit the inactivation of the activated channels, thereby blocking neuronal transmission. This Androctonus mauritanicus mauritanicus (Scorpion) protein is Alpha-toxin Amm5.